The primary structure comprises 256 residues: uncharacterized protein (256 aa).

Transmembrane regions (helical) follow at residues 6 to 26 (TSFITQSLVYSLLVVGIVSFL), 29 to 49 (LALVGLLLPGIILMTTLGTFI), 61 to 81 (ISGTTGCLLGDWISYYIGLYF), 145 to 165 (IIGCILWPPVYFFPGIVTGIA), 175 to 195 (YYFKWLLLLISILIWLGIWLI), and 218 to 238 (IGWLAILTMSSGILSLIAIQF).

This sequence belongs to the DedA family.

Its subcellular location is the cell membrane. This is an uncharacterized protein from Buchnera aphidicola subsp. Acyrthosiphon pisum (strain APS) (Acyrthosiphon pisum symbiotic bacterium).